A 49-amino-acid polypeptide reads, in one-letter code: Large ribosomal subunit protein bL33 (49 aa).

This sequence belongs to the bacterial ribosomal protein bL33 family.

In Syntrophobacter fumaroxidans (strain DSM 10017 / MPOB), this protein is Large ribosomal subunit protein bL33.